Consider the following 161-residue polypeptide: Protein-export protein SecB (161 aa).

This sequence belongs to the SecB family. Homotetramer, a dimer of dimers. One homotetramer interacts with 1 SecA dimer.

The protein resides in the cytoplasm. Functionally, one of the proteins required for the normal export of preproteins out of the cell cytoplasm. It is a molecular chaperone that binds to a subset of precursor proteins, maintaining them in a translocation-competent state. It also specifically binds to its receptor SecA. The protein is Protein-export protein SecB of Shewanella baltica (strain OS155 / ATCC BAA-1091).